We begin with the raw amino-acid sequence, 118 residues long: MGNRAFKSHHGHFLSAEGEAVKTHHGHHDHHTHFHVENHGGKVALKTHCGKYLSIGDHKQVYLSHHLHGDHSLFHLEHHGGKVSIKGHHHHYISADHHGHVSTKEHHDHDTTFEEIII.

The N-myristoyl glycine moiety is linked to residue G2. Residues 8–109 (SHHGHFLSAE…HVSTKEHHDH (102 aa)) form a contains several HHXH repeats region. Repeat copies occupy residues 34–46 (FHVE…VALK) and 74–86 (FHLE…VSIK). The segment at 34 to 86 (FHVENHGGKVALKTHCGKYLSIGDHKQVYLSHHLHGDHSLFHLEHHGGKVSIK) is 2 X 13 AA approximate repeats.

Belongs to the hisactophilin family. Homodimer or heterodimer of hatA and hatB, linked by a disulfide bond. In terms of processing, phosphorylated.

It localises to the cytoplasm. It is found in the cell membrane. In terms of biological role, may act as an intracellular pH sensor that links chemotactic signals to responses in the microfilament system of the cells by nucleating actin polymerization or stabilizing the filaments. In Dictyostelium discoideum (Social amoeba), this protein is Hisactophilin-1 (hatA).